Consider the following 138-residue polypeptide: MQQTTVANHSLFPTLPPEFLPLALYTVAATVLIGVLLLAAWWLGAKTTNRNKELPYESGVIPTGSARLAYPVPFYLIAIFFIVFDVEAAFIFAWATAWRELGLAGLIHITFFIVILLLGLVWLWMKGGLDWGPSRERR.

3 helical membrane-spanning segments follow: residues 19-39 (FLPL…LLLA), 74-94 (FYLI…IFAW), and 103-123 (LAGL…LVWL).

It belongs to the complex I subunit 3 family. NDH-1 is composed of 14 different subunits. Subunits NuoA, H, J, K, L, M, N constitute the membrane sector of the complex.

It is found in the cell inner membrane. It catalyses the reaction a quinone + NADH + 5 H(+)(in) = a quinol + NAD(+) + 4 H(+)(out). NDH-1 shuttles electrons from NADH, via FMN and iron-sulfur (Fe-S) centers, to quinones in the respiratory chain. The immediate electron acceptor for the enzyme in this species is believed to be ubiquinone. Couples the redox reaction to proton translocation (for every two electrons transferred, four hydrogen ions are translocated across the cytoplasmic membrane), and thus conserves the redox energy in a proton gradient. In Geobacter metallireducens (strain ATCC 53774 / DSM 7210 / GS-15), this protein is NADH-quinone oxidoreductase subunit A 1.